The primary structure comprises 376 residues: 28S rRNA (uridine-N(3))-methyltransferase (376 aa).

Disordered stretches follow at residues 1-33 (MAER…EEKK) and 49-71 (AQEE…DRGR). Residues 15–33 (HGQRIEWRKWKQQKKEEKK) show a composition bias toward basic and acidic residues. S-adenosyl-L-homocysteine-binding residues include T289, R292, G312, N341, and T342. 4 residues coordinate S-adenosyl-L-methionine: R292, G312, N341, and T342.

The protein belongs to the class IV-like SAM-binding methyltransferase superfamily. Interacts with INCA1.

Its subcellular location is the cytoplasm. The protein resides in the cytoskeleton. It localises to the spindle. It is found in the chromosome. The protein localises to the centromere. Its subcellular location is the kinetochore. The protein resides in the microtubule organizing center. It localises to the centrosome. It carries out the reaction uridine in 28S rRNA + S-adenosyl-L-methionine = N(3)-methyluridine in 28S rRNA + S-adenosyl-L-homocysteine + H(+). Functionally, S-adenosyl-L-methionine-dependent methyltransferase that specifically methylates the N3 position of a uridine in 28S rRNA. Required for association of the centrosomes with the poles of the bipolar mitotic spindle during metaphase. Also involved in chromosome alignment. May promote centrosome maturation probably by recruiting A-kinase anchor protein AKAP9 to centrosomes in early mitosis. Binds specifically to miRNA MIR145 hairpin, regulates MIR145 expression at a postranscriptional level. The polypeptide is 28S rRNA (uridine-N(3))-methyltransferase (Homo sapiens (Human)).